Consider the following 1667-residue polypeptide: MASKQTKKKEVHRINSAHGSDKSKDFYPFGSNVQSGSTEQKKGKFPLWPEWSEADINSEKWDAGKGAKEKDKTGKSPVFHFFEDPEGKIELPPSLKIYSWKRPQDILFSQTPVVVKNEITFDLFSANEHLLCSELMRWIISEIYAVWKIFNGGILSNYFKGTSGEPPLLPWKPWEHIYSLCKAVKGHMPLFNSYGKYVVKLYWMGCWRKITIDDFLPFDEDNNLLLPATTYEFELWPMLLSKAIIKLANIDIHVADRRELGEFTVIHALTGWLPEVISLHPGYMDKVWELLKEILPEFKLSDEASSESKIAVLDSKLKEPGKEGKEGKEIKDGKEVKDVKEFKPESSLTTLKAPEKSDKVPKEKADARDIGKKRSKDGEKEKFKFSLHGSRPSSEVQYSVQSLSDCSSAIQTSHMVVYATFTPLYLFENKIFSLEKMADSAEKLREYGLSHICSHPVLVTRSRSCPLVAPPKPPPLPPWKLIRQKKETVITDEAQELIVKKPERFLEISSPFLNYRMTPFTIPTEMHFVRSLIKKGIPPGSDLPSVSETDETATHSQTDLSQITKATSQGNTASQVILGKGTDEQTDFGLGDAHQSDGLNLEREIVSQTTATQEKSQEELPTTNNSVSKEIWLDFEDFCVCFQNIYIFHKPSSYCLNFQKSEFKFSEERVSYYLFVDSLKPIELLVCFSALVRWGEYGALTKDSPPIEPGLLTAETFSWKSLKPGSLVLKIHTYATKATVVRLPVGRHMLLFNAYSPVGHSIHICSMVSFVIGDEHVVLPNFEPESCRFTEQSLLIMKAIGNVIANFKDKGKLSAALKDLQTAHYPVPFHDKELTAQHFRVFHLSLWRLMKKVQITKPPPNFKFAFRAMVLDLELLNSSLEEVSLVEWLDVKYCMPTSDKEYSAEEVAAAIKIQAMWRGTYVRLLMKARIPDTKENISVADTLQKVWAVLEMNLEQYAVSLLRLMFKSKCKSLESYPCYQDEETKIAFADYTVTYQEQPPNSWFIVFRETFLVHQDMILVPKVYTTLPICILHIVNNDTMEQVPKVFQKVVPYLYTKNKKGYTFVAEAFTGDTYVAASRWKLRLIGSSAPLPCLSRDSPCNSFAIKEIRDYYIPNDKKILFRYSVKVLTPQPATIQVRTSKPDAFIKLQVLENEETMVSSTGKGQAIIPAFHFLKSEKGLSSQSSKHILSFHSASKKEQEVYVKKKAAQGIQKSPKGRAVSAIQDIGLPLVEEETTSTPTREDSSSTPLQNYKYIIQCSVLYNSWPLTESQLTFVQALKDLKKSNTKAYGERHEELINLGSPDSHTISEGQKSSVTSKTTRKGKEKSSEKEKTAKEKQAPRFEPQISTVHPQQEDPNKPYWILRLVTEHNESELFEVKKDTERADEIRAMKQAWETTEPGRAIKASQARLHYLSGFIKKTSDAESPPISESQTKPKEEVETAARGVKEPNSKNSAGSESKEMTQTGSGSAVWKKWQLTKGLRDVAKSTSSESGGVSSPGKEEREQSTRKENIQTGPRTRSPTILETSPRLIRKALEFMDLSQYVRKTDTDPLLQTDELNQQQAMQKAEEIHQFRQHRTRVLSIRNIDQEERLKLKDEVLDMYKEMQDSLDEARQKIFDIREEYRNKLLEAEHLKLETLAAQEAAMKLETEKMTPAPDTQKKKKGKKK.

Positions 1-11 are enriched in basic residues; it reads MASKQTKKKEV. 3 disordered regions span residues 1-45, 347-387, and 540-566; these read MASK…KGKF, SLTT…KFSL, and GSDL…ITKA. In terms of domain architecture, Calpain catalytic spans 70 to 411; it reads KDKTGKSPVF…SLSDCSSAIQ (342 aa). Positions 353 to 384 are enriched in basic and acidic residues; sequence APEKSDKVPKEKADARDIGKKRSKDGEKEKFK. The span at 554–566 shows a compositional bias: polar residues; the sequence is THSQTDLSQITKA. Residues 763 to 890 enclose the Globin; C-terminal part domain; the sequence is HICSMVSFVI…EEVSLVEWLD (128 aa). Heme b-binding residues include Gln-792 and His-824. The 30-residue stretch at 906–935 folds into the IQ domain; it reads EVAAAIKIQAMWRGTYVRLLMKARIPDTKE. The Globin; N-terminal part domain occupies 936-968; that stretch reads NISVADTLQKVWAVLEMNLEQYAVSLLRLMFKS. 2 disordered regions span residues 1297–1355 and 1420–1522; these read INLG…QQED and TSDA…RSPT. Residues 1301-1315 show a composition bias toward polar residues; it reads SPDSHTISEGQKSSV. Composition is skewed to basic and acidic residues over residues 1325–1340 and 1433–1450; these read EKSS…KQAP and TKPK…KEPN. Over residues 1451–1468 the composition is skewed to polar residues; that stretch reads SKNSAGSESKEMTQTGSG. The segment covering 1487–1498 has biased composition (low complexity); it reads STSSESGGVSSP. A compositionally biased stretch (basic and acidic residues) spans 1499–1511; sequence GKEEREQSTRKEN. Positions 1512–1522 are enriched in polar residues; it reads IQTGPRTRSPT. The stretch at 1588–1629 forms a coiled coil; that stretch reads QEERLKLKDEVLDMYKEMQDSLDEARQKIFDIREEYRNKLLE. A disordered region spans residues 1646–1667; it reads KLETEKMTPAPDTQKKKKGKKK.

The protein in the central section; belongs to the globin family. In the N-terminal section; belongs to the peptidase C2 family. Interacts with septin SEPT10; contributes to in vitro proteolytic cleavage of SEPT10 in a calmodulin-dependent manner. Interacts with CFAP69. Interacts with SPEF2. May interact with calmodulin.

It is found in the cell projection. It localises to the cilium. The protein localises to the flagellum. Probable chimeric globin with a bis-histidyl six-coordinate heme-iron atom through which it could bind dioxygen, carbon monoxide and nitric oxide. Required for sperm flagellum formation and maturation of elongating spermatids, thus playing an essential role in male fertility. The sequence is that of Androglobin from Homo sapiens (Human).